The primary structure comprises 475 residues: Ribulose bisphosphate carboxylase large chain (475 aa).

Residues M1–S2 constitute a propeptide that is removed on maturation. N-acetylproline is present on P3. K14 is subject to N6,N6,N6-trimethyllysine. Substrate-binding residues include N123 and T173. K175 functions as the Proton acceptor in the catalytic mechanism. K177 is a binding site for substrate. 3 residues coordinate Mg(2+): K201, D203, and E204. K201 is modified (N6-carboxylysine). H294 acts as the Proton acceptor in catalysis. Residues R295, H327, and S379 each coordinate substrate.

Belongs to the RuBisCO large chain family. Type I subfamily. Heterohexadecamer of 8 large chains and 8 small chains; disulfide-linked. The disulfide link is formed within the large subunit homodimers. Mg(2+) serves as cofactor. Post-translationally, the disulfide bond which can form in the large chain dimeric partners within the hexadecamer appears to be associated with oxidative stress and protein turnover.

Its subcellular location is the plastid. It is found in the chloroplast. It carries out the reaction 2 (2R)-3-phosphoglycerate + 2 H(+) = D-ribulose 1,5-bisphosphate + CO2 + H2O. The enzyme catalyses D-ribulose 1,5-bisphosphate + O2 = 2-phosphoglycolate + (2R)-3-phosphoglycerate + 2 H(+). Functionally, ruBisCO catalyzes two reactions: the carboxylation of D-ribulose 1,5-bisphosphate, the primary event in carbon dioxide fixation, as well as the oxidative fragmentation of the pentose substrate in the photorespiration process. Both reactions occur simultaneously and in competition at the same active site. The sequence is that of Ribulose bisphosphate carboxylase large chain from Platanus occidentalis (Sycamore).